A 90-amino-acid chain; its full sequence is Small ribosomal subunit protein bS16 (90 aa).

The protein belongs to the bacterial ribosomal protein bS16 family.

This is Small ribosomal subunit protein bS16 from Geobacillus kaustophilus (strain HTA426).